A 699-amino-acid chain; its full sequence is Chitin synthase 7 (699 aa).

Transmembrane regions (helical) follow at residues 19-39 (IVGVVMLAAVLEWFLWIAAFL), 58-80 (SVVVALLFTALRSIFLPIMVVTL), 98-118 (LQWFGFWCFAGLLTVPWLFCI), 445-465 (FMQNTIRTTALLFFIMVLAII), 474-494 (LPVGFIAVSLGLNWLLMIYFG), and 507-527 (VMFVVNPFFNWFYMVYGIFTA). Residues 628-648 (AAGGSGEASEPGTRWAPDPRE) are disordered.

Belongs to the chitin synthase family. Class VI subfamily.

The protein resides in the cell membrane. It catalyses the reaction [(1-&gt;4)-N-acetyl-beta-D-glucosaminyl](n) + UDP-N-acetyl-alpha-D-glucosamine = [(1-&gt;4)-N-acetyl-beta-D-glucosaminyl](n+1) + UDP + H(+). Functionally, polymerizes chitin, a structural polymer of the cell wall and septum, by transferring the sugar moiety of UDP-GlcNAc to the non-reducing end of the growing chitin polymer. Plays a role in cell wall integrity. Required to successfully penetrate the host plants and thus plays a key role in pathogenicity. The sequence is that of Chitin synthase 7 from Verticillium dahliae (strain VdLs.17 / ATCC MYA-4575 / FGSC 10137) (Verticillium wilt).